A 749-amino-acid polypeptide reads, in one-letter code: 5-methyltetrahydropteroyltriglutamate--homocysteine methyltransferase (749 aa).

5-methyltetrahydropteroyltri-L-glutamate-binding positions include 15-18 (RELK) and Lys114. Residues 425-427 (IGS) and Glu478 each bind L-homocysteine. Residues 425 to 427 (IGS) and Glu478 contribute to the L-methionine site. Trp555 provides a ligand contact to 5-methyltetrahydropteroyltri-L-glutamate. Asp593 contacts L-homocysteine. An L-methionine-binding site is contributed by Asp593. 5-methyltetrahydropteroyltri-L-glutamate is bound at residue Glu599. Positions 636, 638, and 660 each coordinate Zn(2+). Catalysis depends on His689, which acts as the Proton donor. Residue Cys721 participates in Zn(2+) binding.

It belongs to the vitamin-B12 independent methionine synthase family. Requires Zn(2+) as cofactor.

The catalysed reaction is 5-methyltetrahydropteroyltri-L-glutamate + L-homocysteine = tetrahydropteroyltri-L-glutamate + L-methionine. It functions in the pathway amino-acid biosynthesis; L-methionine biosynthesis via de novo pathway; L-methionine from L-homocysteine (MetE route): step 1/1. Catalyzes the transfer of a methyl group from 5-methyltetrahydrofolate to homocysteine resulting in methionine formation. The protein is 5-methyltetrahydropteroyltriglutamate--homocysteine methyltransferase of Streptococcus pneumoniae serotype 4 (strain ATCC BAA-334 / TIGR4).